The following is a 76-amino-acid chain: Toxin Acra III-1 (76 aa).

The LCN-type CS-alpha/beta domain maps to 4-67 (PGNYPLDTRG…IWDAVKNHCT (64 aa)). Intrachain disulfides connect C18–C41, C27–C46, and C31–C48.

This sequence belongs to the long (3 C-C) scorpion toxin superfamily. Sodium channel inhibitor family. Beta subfamily. In terms of tissue distribution, expressed by the venom gland.

It localises to the secreted. Its function is as follows. Binds to sodium channels (Nav) and affects the channel activation process. This chain is Toxin Acra III-1, found in Androctonus crassicauda (Arabian fat-tailed scorpion).